A 727-amino-acid polypeptide reads, in one-letter code: Protein edg-1 (727 aa).

Residues 703-727 form a disordered region; that stretch reads FAESSVKPTTSSAYGNSSNFSRYAD.

As to quaternary structure, may interact with deps-1 and prg-1.

The protein resides in the cytoplasmic granule. In terms of biological role, plays a role in regulating deps-1 cluster formation in the germline. In Caenorhabditis elegans, this protein is Protein edg-1.